The sequence spans 365 residues: Chorismate synthase (365 aa).

Residues R48 and R54 each coordinate NADP(+). FMN contacts are provided by residues 125–127, 237–238, G277, 292–296, and R318; these read RSS, NA, and KPTSS.

The protein belongs to the chorismate synthase family. In terms of assembly, homotetramer. FMNH2 serves as cofactor.

The catalysed reaction is 5-O-(1-carboxyvinyl)-3-phosphoshikimate = chorismate + phosphate. The protein operates within metabolic intermediate biosynthesis; chorismate biosynthesis; chorismate from D-erythrose 4-phosphate and phosphoenolpyruvate: step 7/7. In terms of biological role, catalyzes the anti-1,4-elimination of the C-3 phosphate and the C-6 proR hydrogen from 5-enolpyruvylshikimate-3-phosphate (EPSP) to yield chorismate, which is the branch point compound that serves as the starting substrate for the three terminal pathways of aromatic amino acid biosynthesis. This reaction introduces a second double bond into the aromatic ring system. This Paracidovorax citrulli (strain AAC00-1) (Acidovorax citrulli) protein is Chorismate synthase.